A 342-amino-acid polypeptide reads, in one-letter code: Protein-glutamate methylesterase/protein-glutamine glutaminase 1 (342 aa).

The Response regulatory domain occupies 3-121 (RVLVIDDSLF…NIREIGGELK (119 aa)). Residue Asp-54 is modified to 4-aspartylphosphate. The 200-residue stretch at 141-340 (DSNARNVVLI…EKIVETIRAM (200 aa)) folds into the CheB-type methylesterase domain. Active-site residues include Ser-153, His-180, and Asp-282.

It belongs to the CheB family. Post-translationally, phosphorylated by CheA. Phosphorylation of the N-terminal regulatory domain activates the methylesterase activity.

The protein localises to the cytoplasm. The catalysed reaction is [protein]-L-glutamate 5-O-methyl ester + H2O = L-glutamyl-[protein] + methanol + H(+). It carries out the reaction L-glutaminyl-[protein] + H2O = L-glutamyl-[protein] + NH4(+). Involved in chemotaxis. Part of a chemotaxis signal transduction system that modulates chemotaxis in response to various stimuli. Catalyzes the demethylation of specific methylglutamate residues introduced into the chemoreceptors (methyl-accepting chemotaxis proteins or MCP) by CheR. Also mediates the irreversible deamidation of specific glutamine residues to glutamic acid. This is Protein-glutamate methylesterase/protein-glutamine glutaminase 1 from Methanospirillum hungatei JF-1 (strain ATCC 27890 / DSM 864 / NBRC 100397 / JF-1).